Here is a 137-residue protein sequence, read N- to C-terminus: Large ribosomal subunit protein uL16 (137 aa).

It belongs to the universal ribosomal protein uL16 family. In terms of assembly, part of the 50S ribosomal subunit.

Its function is as follows. Binds 23S rRNA and is also seen to make contacts with the A and possibly P site tRNAs. This chain is Large ribosomal subunit protein uL16, found in Psychrobacter sp. (strain PRwf-1).